Reading from the N-terminus, the 1172-residue chain is DNA-directed RNA polymerase subunit beta (1172 aa).

Belongs to the RNA polymerase beta chain family. The RNAP catalytic core consists of 2 alpha, 1 beta, 1 beta' and 1 omega subunit. When a sigma factor is associated with the core the holoenzyme is formed, which can initiate transcription.

The enzyme catalyses RNA(n) + a ribonucleoside 5'-triphosphate = RNA(n+1) + diphosphate. Its function is as follows. DNA-dependent RNA polymerase catalyzes the transcription of DNA into RNA using the four ribonucleoside triphosphates as substrates. The chain is DNA-directed RNA polymerase subunit beta from Mycobacterium sp. (strain JLS).